The primary structure comprises 249 residues: Putative ABC transporter ATP-binding protein GSU1281 (249 aa).

The region spanning 6–236 is the ABC transporter domain; the sequence is VEVRDLCHCY…DELLATCRLE (231 aa). 39-46 lines the ATP pocket; that stretch reads GANGAGKS.

It belongs to the ABC transporter superfamily.

The protein localises to the cell inner membrane. Functionally, probably part of an ABC transporter complex. Responsible for energy coupling to the transport system. The chain is Putative ABC transporter ATP-binding protein GSU1281 from Geobacter sulfurreducens (strain ATCC 51573 / DSM 12127 / PCA).